The sequence spans 568 residues: TNF receptor-associated factor 3 (568 aa).

The interval 1 to 28 is disordered; that stretch reads MESSKKMDSPGALQTNPPLKLHTDRSAG. Ser9 bears the Phosphoserine mark. A Glycyl cysteine thioester (Cys-Gly) (interchain with G-Cter in ubiquitin) cross-link involves residue Cys56. Residues 68–77 form an RING-type zinc finger; it reads CGHRFCESCM. A Glycyl cysteine thioester (Cys-Gly) (interchain with G-Cter in ubiquitin) cross-link involves residue Cys124. 2 TRAF-type zinc fingers span residues 135–190 and 191–249; these read VHLK…IALQ and KHED…QQIK. Lys168 participates in a covalent cross-link: Glycyl lysine isopeptide (Lys-Gly) (interchain with G-Cter in ubiquitin). Positions 267–338 form a coiled coil; that stretch reads SNSLEKKVSL…KLKELDKEIR (72 aa). Lys329 participates in a covalent cross-link: Glycyl lysine isopeptide (Lys-Gly) (interchain with G-Cter in ubiquitin). Positions 392–415 are (Microbial infection) Interaction with glycoprotein N of Andes and New York hantaviruses; that stretch reads LSVHDIRLADMDLRFQVLETASYN. One can recognise an MATH domain in the interval 415–560; the sequence is NGVLIWKIRD…DDTIFIKVIV (146 aa).

It belongs to the TNF receptor-associated factor family. A subfamily. Homotrimer. Heterotrimer with TRAF2 and TRAF5. Interacts with LTBR/TNFRSF3, TNFRSF4, TNFRSF5/CD40, TNFRSF8/CD30, TNFRSF13C TNFRSF17/BCMA, TLR4 and EDAR. Interacts with MAP3K5, MAP3K14, TRAIP/TRIP, TDP2/TTRAP, TANK/ITRAF and TRAF3IP1. Interaction with TNFRSF5/CD40 is modulated by TANK/ITRAF, which competes for the same binding site. Interacts with TICAM1. Interacts with TRAFD1. Interacts with OTUB1, OTUB2 and OTUD5. Interacts with RNF216, OPTN and TBK1. Identified in a complex with TRAF2, MAP3K14 and BIRC3. Interacts with BIRC2 and BIRC3. Upon exposure to bacterial lipopolysaccharide (LPS), recruited to a transient complex containing TLR4, TRAF3, TRAF6, IKBKG, MAP3K7, MYD88, TICAM1, BIRC2, BIRC3 and UBE2N. Interacts (via RING-type zinc finger domain) with SRC. Interacts with CARD14. Interacts (via MATH domain) with PTPN22; the interaction promotes TRAF3 polyubiquitination. Interacts with MAVS. Directly interacts with DDX3X; this interaction stimulates TRAF3 'Lys-63' ubiquitination. Interacts with IRF3. Interacts with IKBKE in the course of Sendai virus infection. Interacts with TRIM35. Interacts with GAPDH; promoting TRAF3 ubiquitination. Interacts with PPP3CA and PPP3CB. Interacts with ATP1B1; promoting TRAF3 ubiquitination. Interacts with RALGDS. Interacts with FBXO11. As to quaternary structure, (Microbial infection) Interacts (via N-terminus) with New York hantavirus glycoprotein N (via C-terminus); this interaction inhibits the formation of TRAF3-TBK1 complexes. In terms of assembly, (Microbial infection) Interacts with Andes hantavirus glycoprotein N (via C-terminus); this interaction inhibits the formation of TRAF3-TBK1 complexes. (Microbial infection) Interacts with Tula hantavirus glycoprotein N (via C-terminus); this interaction inhibits the formation of TRAF3-TBK1 complexes. As to quaternary structure, (Microbial infection) Interacts with Epstein-Barr virus protein LMP1. Post-translationally, undergoes 'Lys-48'-linked polyubiquitination, leading to its proteasomal degradation in response to signaling by TNFSF13B, TLR4 or through CD40. 'Lys-48'-linked polyubiquitinated form is deubiquitinated by OTUD7B, preventing TRAF3 proteolysis and over-activation of non-canonical NF-kappa-B. Undergoes 'Lys-63'-linked ubiquitination during early stages of virus infection, and 'Lys-48'-linked ubiquitination during later stages. Undergoes both 'Lys-48'-linked and 'Lys-63'-linked ubiquitination in response to TLR3 and TLR4 signaling. 'Lys-63'-linked ubiquitination can be mediated by TRIM35. Deubiquitinated by OTUB1, OTUB2 and OTUD5. Undergoes 'Lys-63'-linked deubiquitination by MYSM1 to terminate the pattern-recognition receptors/PRRs pathways. Also undergoes 'Lys-29'-linked ubiquitination on Cys-56 and Cys-124 by NEDD4L; leading to increased 'Lys-48'- and 'Lys-63'-linked ubiquitination as well as increased binding to TBK1. TLR4 signals emanating from bacteria containing vesicles trigger 'Lys-33'-linked polyubiquitination that promotes the assembly of the exocyst complex thereby connecting innate immune signaling to the cellular trafficking apparatus. Deubiquitinated by USP25 during viral infection, leading to TRAF3 stabilization and type I interferon production. Ubiquitinated at Lys-329 by the SCF(FBXL2) complex, leading to its degradation by the proteasome. 'Lys-63'-linked ubiquitination by FBXO11 in a NEDD8-dependent manner promotes the amplification of IFN-I signaling. In terms of processing, (Microbial infection) Cleaved by enterovirus D68 protease 2A; leading to inhibition of NF-kappa-B or IFN-beta triggered by TRAF3.

It localises to the cytoplasm. It is found in the endosome. The protein localises to the mitochondrion. It catalyses the reaction S-ubiquitinyl-[E2 ubiquitin-conjugating enzyme]-L-cysteine + [acceptor protein]-L-lysine = [E2 ubiquitin-conjugating enzyme]-L-cysteine + N(6)-ubiquitinyl-[acceptor protein]-L-lysine.. In terms of biological role, cytoplasmic E3 ubiquitin ligase that regulates various signaling pathways, such as the NF-kappa-B, mitogen-activated protein kinase (MAPK) and interferon regulatory factor (IRF) pathways, and thus controls a lot of biological processes in both immune and non-immune cell types. In TLR and RLR signaling pathways, acts as an E3 ubiquitin ligase promoting the synthesis of 'Lys-63'-linked polyubiquitin chains on several substrates such as ASC that lead to the activation of the type I interferon response or the inflammasome. Following the activation of certain TLRs such as TLR4, acts as a negative NF-kappa-B regulator, possibly to avoid unregulated inflammatory response, and its degradation via 'Lys-48'-linked polyubiquitination is required for MAPK activation and production of inflammatory cytokines. Alternatively, when TLR4 orchestrates bacterial expulsion, TRAF3 undergoes 'Lys-33'-linked polyubiquitination and subsequently binds to RALGDS, mobilizing the exocyst complex to rapidly expel intracellular bacteria back for clearance. Also acts as a constitutive negative regulator of the alternative NF-kappa-B pathway, which controls B-cell survival and lymphoid organ development. Required for normal antibody isotype switching from IgM to IgG. Plays a role T-cell dependent immune responses. Down-regulates proteolytic processing of NFKB2, and thereby inhibits non-canonical activation of NF-kappa-B. Promotes ubiquitination and proteasomal degradation of MAP3K14. The polypeptide is TNF receptor-associated factor 3 (Homo sapiens (Human)).